A 446-amino-acid chain; its full sequence is Peroxisomal biogenesis factor 3 (446 aa).

The Peroxisomal segment spans residues 1–12; sequence MARTGLQRHRGK. A helical transmembrane segment spans residues 13 to 33; the sequence is LLGTGAVLGGLVVAGVVAAVA. At 34 to 446 the chain is on the cytoplasmic side; that stretch reads AKRWVRRQQQ…SASVYSNFGV (413 aa). The tract at residues 101 to 122 is disordered; the sequence is RAGEDDEQGSGGHASAGEGSVS.

This sequence belongs to the peroxin-3 family.

Its subcellular location is the peroxisome membrane. Its function is as follows. Involved in peroxisome biosynthesis. This is Peroxisomal biogenesis factor 3 (PEX3) from Eremothecium gossypii (strain ATCC 10895 / CBS 109.51 / FGSC 9923 / NRRL Y-1056) (Yeast).